Here is a 338-residue protein sequence, read N- to C-terminus: Lipopolysaccharide 1,2-glucosyltransferase (338 aa).

Residues G33–Y38 and D130–A131 each bind UDP. Mg(2+) contacts are provided by D130 and D132. Short sequence motifs (DXD) lie at residues D130–D132 and D215–D217. H264 is a binding site for Mg(2+). H264–K270 is a UDP binding site.

It belongs to the glycosyltransferase 8 family. It depends on Mg(2+) as a cofactor.

The protein resides in the cell inner membrane. It catalyses the reaction UDP-glucose + [lipopolysaccharide] = UDP + D-glucosyl-[lipopolysaccharide].. It carries out the reaction alpha-D-Glc-(1-&gt;3)-[alpha-D-Gal-(1-&gt;6)]-alpha-D-Glc-(1-&gt;3)-[L-alpha-D-Hep-(1-&gt;7)]-4-O-PO3(2-)-L-alpha-D-Hep-(1-&gt;3)-4-O-PO3(2-)-L-alpha-D-Hep-(1-&gt;5)-[alpha-Kdo-(2-&gt;4)]-alpha-Kdo-(2-&gt;6)-lipid A + UDP-alpha-D-glucose = alpha-D-Glc-(1-&gt;2)-alpha-D-Glc-(1-&gt;3)-[alpha-D-Gal-(1-&gt;6)]-alpha-D-Glc-(1-&gt;3)-[L-alpha-D-Hep-(1-&gt;7)]-4-O-PO3(2-)-L-alpha-D-Hep-(1-&gt;3)-4-O-PO3(2-)-L-alpha-D-Hep-(1-&gt;5)-[alpha-Kdo-(2-&gt;4)]-alpha-Kdo-(2-&gt;6)-lipid A + UDP + H(+). It participates in bacterial outer membrane biogenesis; LPS core biosynthesis. Its function is as follows. Glucosyltransferase involved in the biosynthesis of the core oligosaccharide region of lipopolysaccharide (LPS). Catalyzes the addition of a glucose (glucose III) to the outer-core glucose II. The protein is Lipopolysaccharide 1,2-glucosyltransferase of Escherichia coli (strain K12).